The chain runs to 360 residues: Nucleoporin SEH1-A (360 aa).

WD repeat units lie at residues 10–49 (DHKD…NWHC), 55–96 (THSG…SNDK), 111–152 (DSRT…NLSQ), 160–210 (SCKL…RKYA), 217–258 (SVSD…KELS), and 276–315 (NHNS…NWKC).

This sequence belongs to the WD repeat SEC13 family. As to quaternary structure, component of the Nup107-160 subcomplex of the nuclear pore complex (NPC). The Nup107-160 subcomplex includes NUP160, NUP133, NUP107, NUP98, NUP85, NUP43, NUP37, SEH1 and SEC13. Component of the GATOR2 subcomplex, composed of MIOS, SEC13, SEH1L, WDR24 and WDR59. The GATOR2 complex interacts with CASTOR1 and CASTOR2; the interaction is negatively regulated by arginine. The GATOR2 complex interacts with SESN1, SESN2 and SESN3; the interaction is negatively regulated by amino acids.

The protein localises to the chromosome. It localises to the centromere. Its subcellular location is the kinetochore. The protein resides in the nucleus. It is found in the nuclear pore complex. The protein localises to the lysosome membrane. The GATOR2 complex is negatively regulated by the upstream amino acid sensors CASTOR1 and SESN2, which sequester the GATOR2 complex in absence of amino acids. In the presence of abundant amino acids, GATOR2 is released from CASTOR1 and SESN2 and activated. Functionally, component of the Nup107-160 subcomplex of the nuclear pore complex (NPC). The Nup107-160 subcomplex is required for the assembly of a functional NPC. The Nup107-160 subcomplex is also required for normal kinetochore microtubule attachment, mitotic progression and chromosome segregation. This subunit plays a role in recruitment of the Nup107-160 subcomplex to the kinetochore. In terms of biological role, as a component of the GATOR2 complex, functions as an activator of the amino acid-sensing branch of the mTORC1 signaling pathway. The GATOR2 complex indirectly activates mTORC1 through the inhibition of the GATOR1 subcomplex. GATOR2 probably acts as an E3 ubiquitin-protein ligase toward GATOR1. In the presence of abundant amino acids, the GATOR2 complex mediates ubiquitination of the NPRL2 core component of the GATOR1 complex, leading to GATOR1 inactivation. In the absence of amino acids, GATOR2 is inhibited, activating the GATOR1 complex. This Xenopus laevis (African clawed frog) protein is Nucleoporin SEH1-A (seh1l-a).